The primary structure comprises 469 residues: Gustatory receptor for sugar taste 64f (469 aa).

Residues 1 to 117 are Cytoplasmic-facing; the sequence is MKILPKLERK…SFSWRNIRTC (117 aa). A helical membrane pass occupies residues 118 to 138; sequence FSLLFIASSLANFGLSLFKVL. Residues 139–146 are Extracellular-facing; that stretch reads NNPISFNS. A helical transmembrane segment spans residues 147-167; that stretch reads IKPIIFRGSVLLVLIVALNLA. At 168–199 the chain is on the cytoplasmic side; it reads RQWPQLMMYWHTVEKDLPQYKTQLTKWKMGHT. A helical membrane pass occupies residues 200-220; it reads ISMVMLLGMMLSFAEHILSMV. Residues 221 to 265 lie on the Extracellular side of the membrane; it reads SAINYASFCNRTADPIQNYFLRTNDEIFFVTSYSTTLALWGKFQN. An N-linked (GlcNAc...) asparagine glycan is attached at Asn230. Residues 266 to 286 form a helical membrane-spanning segment; sequence VFSTFIWNYMDLFVMIVSIGL. Over 287 to 330 the chain is Cytoplasmic; the sequence is ASKFRQLNDDLRNFKGMNMAPSYWSERRIQYRNICILCDKMDDA. Residues 331 to 351 traverse the membrane as a helical segment; the sequence is ISLITMVSFSNNLYFICVQLL. At 352-353 the chain is on the extracellular side; it reads RS. A helical transmembrane segment spans residues 354–374; that stretch reads LNTMPSVAHAVYFYFSLIFLI. Residues 375–435 lie on the Cytoplasmic side of the membrane; that stretch reads GRTLAVSLYS…GMKFFHLTRK (61 aa). A helical transmembrane segment spans residues 436–456; the sequence is LVLSVAGTIVTYELVLIQFHE. Residues 457 to 469 are Extracellular-facing; it reads DNDLWDCDQSYYS.

It belongs to the insect chemoreceptor superfamily. Gustatory receptor (GR) family. Gr5a subfamily. In terms of tissue distribution, expressed in Gr5a-expressing sugar-sensing cells.

The protein localises to the cell membrane. One of the few identified sugar gustatory receptors identified so far and which promotes the starvation-induced increase of feeding motivation. Required in combination with Gr64a to detect sucrose, maltose, and glucose. The chain is Gustatory receptor for sugar taste 64f (Gr64f) from Drosophila melanogaster (Fruit fly).